Here is an 835-residue protein sequence, read N- to C-terminus: Involucrin (835 aa).

Residues 1–15 are compositionally biased toward polar residues; that stretch reads MSQQHTLPVTLSPAL. Disordered stretches follow at residues 1-133, 150-206, 221-285, 321-342, 381-428, 446-486, 501-548, and 566-809; these read MSQQ…LDQR, EQLL…LEVP, GQLK…QLKH, GQLK…QEGQ, GQLK…VPEE, LDQQ…LEVP, and LDQQ…QPAL. Positions 76 to 91 are enriched in low complexity; it reads EQQQQEPQEQELQQQH. Basic and acidic residues-rich tracts occupy residues 92–115 and 159–168; these read WEQH…KAQR and QEQHLKHLEQ. Over residues 169-181 the composition is skewed to low complexity; the sequence is QEGQLELPEQQEG. 2 stretches are compositionally biased toward basic and acidic residues: residues 182 to 198 and 222 to 268; these read QLKH…HLEQ and QLKH…HLDQ. 3 stretches are compositionally biased toward low complexity: residues 269–281, 329–341, and 389–401; these read QEGQ…QQEG. Basic and acidic residues-rich tracts occupy residues 402 to 421 and 446 to 464; these read QLKH…HQEG and LDQQ…KQLE. Residues 509–521 show a composition bias toward low complexity; that stretch reads QEGQLELPEQQEG. Composition is skewed to basic and acidic residues over residues 522–541, 566–584, and 594–620; these read QLKH…HQEG, LDQQ…KQLE, and KHLE…EHQE. The segment covering 655-668 has biased composition (low complexity); sequence HLVQQEGQLEQQEG. A compositionally biased stretch (basic and acidic residues) spans 669 to 685; sequence QVEHLEEQVGQLKHLEE. Residues 693-710 are compositionally biased toward low complexity; it reads LEQQQGQLEVPEQQVGQP. Composition is skewed to basic and acidic residues over residues 711–721, 729–738, and 751–775; these read KHLEQEEKQLE, QLKHLEKQEA, and KHLE…HLEQ. Residues 776–789 show a composition bias toward polar residues; sequence QEGQLKNLEQQKGQ.

Belongs to the involucrin family. In terms of assembly, directly or indirectly cross-linked to cornifelin (CNFN). Post-translationally, substrate of transglutaminase. Specific glutamines or lysines are cross-linked to keratins, desmoplakin and to inter involucrin molecules. As to expression, keratinocytes of epidermis and other stratified squamous epithelia.

The protein resides in the cytoplasm. In terms of biological role, part of the insoluble cornified cell envelope (CE) of stratified squamous epithelia. In Pongo pygmaeus (Bornean orangutan), this protein is Involucrin (IVL).